Reading from the N-terminus, the 359-residue chain is Lipopolysaccharide 1,6-galactosyltransferase (359 aa).

UDP contacts are provided by Q244 and E276.

It belongs to the glycosyltransferase group 1 family. Glycosyltransferase 4 subfamily.

It catalyses the reaction alpha-D-Glc-(1-&gt;3)-[L-alpha-D-Hep-(1-&gt;7)]-4-O-PO3(2-)-L-alpha-D-Hep-(1-&gt;3)-4-O-PO3(2-)-L-alpha-D-Hep-(1-&gt;5)-[alpha-Kdo-(2-&gt;4)]-alpha-Kdo-(2-&gt;6)-lipid A + UDP-alpha-D-galactose = alpha-D-Gal-(1-&gt;6)-alpha-D-Glc-(1-&gt;3)-[L-alpha-D-Hep-(1-&gt;7)]-4-O-PO3(2-)-L-alpha-D-Hep-(1-&gt;3)-4-O-PO3(2-)-L-alpha-D-Hep-(1-&gt;5)-[alpha-Kdo-(2-&gt;4)]-alpha-Kdo-(2-&gt;6)-lipid A + UDP + H(+). It participates in bacterial outer membrane biogenesis; LPS core biosynthesis. In terms of biological role, galactosyltransferase involved in the biosynthesis of the core oligosaccharide region of lipopolysaccharide (LPS). Catalyzes the addition of galactose from UDP-galactose to the first glucose residue of the LPS outer core. The chain is Lipopolysaccharide 1,6-galactosyltransferase from Salmonella typhimurium (strain LT2 / SGSC1412 / ATCC 700720).